The sequence spans 403 residues: Acetate kinase (403 aa).

Asn-7 is a Mg(2+) binding site. Lys-14 contributes to the ATP binding site. Arg-90 contributes to the substrate binding site. The active-site Proton donor/acceptor is the Asp-147. ATP contacts are provided by residues 207 to 211 (HIGNG), 283 to 285 (DMR), and 331 to 335 (GVGEN). Glu-386 serves as a coordination point for Mg(2+).

This sequence belongs to the acetokinase family. In terms of assembly, homodimer. The cofactor is Mg(2+). It depends on Mn(2+) as a cofactor.

The protein localises to the cytoplasm. It catalyses the reaction acetate + ATP = acetyl phosphate + ADP. It participates in metabolic intermediate biosynthesis; acetyl-CoA biosynthesis; acetyl-CoA from acetate: step 1/2. Catalyzes the formation of acetyl phosphate from acetate and ATP. Can also catalyze the reverse reaction. Phosphorylates propionate (54%) in addition to acetate (100%). Uses GTP (100%), ITP (163%), UTP (56%), and CTP (21%) as phosphoryl donors in addition to ATP (100%). This Thermotoga maritima (strain ATCC 43589 / DSM 3109 / JCM 10099 / NBRC 100826 / MSB8) protein is Acetate kinase.